A 271-amino-acid chain; its full sequence is Aquaporin-11 (271 aa).

Residues 1–14 (MSALLGLRPEVQDT) are Cytoplasmic-facing. The helical transmembrane segment at 15 to 35 (CISLGLMLLFVLFVGLARVIA) threads the bilayer. Topologically, residues 36–41 (RQQLHR) are lumenal. The helical transmembrane segment at 42–62 (PVVHAFVLEFLATFQLCCCTH) threads the bilayer. At 63 to 76 (ELQVLSEQDSAHPT) the chain is on the cytoplasmic side. A helical transmembrane segment spans residues 77–97 (WTLTLIYFFSLVHGLTLVGTA). Residues 98–166 (SNPCGVMMQM…NPIHTDMSKA (69 aa)) lie on the Lumenal side of the membrane. The NPC signature appears at 99 to 101 (NPC). The chain crosses the membrane as a helical span at residues 167–187 (IIIEAICSFIFHSALLHFQEV). The Cytoplasmic portion of the chain corresponds to 188-194 (RTKLRIH). A helical membrane pass occupies residues 195–215 (LLAALITFLAYAGGSLTGALF). Positions 216–218 (NPA) match the NPA motif. The Lumenal portion of the chain corresponds to 216-234 (NPALALSLHFPCFDELFYK). Residues 235 to 255 (FFVVYWLAPSVGVLMMILMFS) traverse the membrane as a helical segment. Over 256–271 (FFLPWLHNNQMTNKKE) the chain is Cytoplasmic.

The protein belongs to the MIP/aquaporin (TC 1.A.8) family. AQP11/AQP12 subfamily. As to quaternary structure, homodimer; disulfide-linked. Homotetramer. Can also form homomultimer. Post-translationally, not glycosylated. In terms of tissue distribution, highly expressed in the S1 proximal tubule segment,. Expressed in the testis, kidney, and liver. Weakly expressed in the heart, brain, and muscle. Highly expressed in the testis. Expressed in the proximal tubule of the cortex of 8-day-old mouse kidney. Expressed in retina specifically at retinal Mueller glial cells. Expressed in brain. Expressed abundantly at the choroid plexus but also expressed weakly in the parenchyma. Expressed at the capillary endothelium in the cerebral white matter. Expressed in adult testis, in the elongated spermatids (ES) and in residual bodies inside Sertoli cells.

The protein localises to the endoplasmic reticulum membrane. It localises to the cytoplasmic vesicle membrane. The protein resides in the cell membrane. It carries out the reaction H2O(in) = H2O(out). The enzyme catalyses glycerol(in) = glycerol(out). It catalyses the reaction H2O2(out) = H2O2(in). In terms of biological role, channel protein that facilitates the transport of water, glycerol and hydrogen peroxide across membrane of cell or organelles guaranteeing intracellular homeostasis in several organes like liver, kidney and brain. In situation of stress, participates in endoplasmic reticulum (ER) homeostasis by regulating redox homeostasis through the transport of hydrogen peroxide across the endoplasmic reticulum membrane thereby regulating the oxidative stress through the NADPH oxidase 2 pathway. Plays a role by maintaining an environment suitable for translation or protein foldings in the ER lumen namely by participating in the PKD1 glycosylation processing resulting in regulation of PKD1 membrane trafficking thereby preventing the accumulation of unfolding protein in ER. Plays a role in the proximal tubule function by regulating its endosomal acidification. May play a role in postnatal kidney development. The chain is Aquaporin-11 from Mus musculus (Mouse).